Here is a 92-residue protein sequence, read N- to C-terminus: Endoribonuclease VapD homolog (92 aa).

The protein belongs to the VapD ribonuclease family. Homodimer.

Its function is as follows. Cleaves ssRNA, mostly between U:A. The polypeptide is Endoribonuclease VapD homolog (Neisseria gonorrhoeae).